Consider the following 217-residue polypeptide: Small ribosomal subunit protein uS3 (217 aa).

Positions 38–106 (IRKFINKELA…QVHINIIEIK (69 aa)) constitute a KH type-2 domain.

The protein belongs to the universal ribosomal protein uS3 family. Part of the 30S ribosomal subunit. Forms a tight complex with proteins S10 and S14.

Binds the lower part of the 30S subunit head. Binds mRNA in the 70S ribosome, positioning it for translation. The sequence is that of Small ribosomal subunit protein uS3 from Streptococcus pyogenes serotype M6 (strain ATCC BAA-946 / MGAS10394).